The primary structure comprises 629 residues: 1-deoxy-D-xylulose-5-phosphate synthase (629 aa).

Residues histidine 72 and 113–115 contribute to the thiamine diphosphate site; that span reads GHA. Aspartate 144 serves as a coordination point for Mg(2+). Residues 145–146, asparagine 174, tyrosine 287, and glutamate 370 each bind thiamine diphosphate; that span reads GA. Asparagine 174 contributes to the Mg(2+) binding site.

This sequence belongs to the transketolase family. DXPS subfamily. In terms of assembly, homodimer. The cofactor is Mg(2+). Requires thiamine diphosphate as cofactor.

It catalyses the reaction D-glyceraldehyde 3-phosphate + pyruvate + H(+) = 1-deoxy-D-xylulose 5-phosphate + CO2. Its pathway is metabolic intermediate biosynthesis; 1-deoxy-D-xylulose 5-phosphate biosynthesis; 1-deoxy-D-xylulose 5-phosphate from D-glyceraldehyde 3-phosphate and pyruvate: step 1/1. Catalyzes the acyloin condensation reaction between C atoms 2 and 3 of pyruvate and glyceraldehyde 3-phosphate to yield 1-deoxy-D-xylulose-5-phosphate (DXP). The sequence is that of 1-deoxy-D-xylulose-5-phosphate synthase from Prochlorococcus marinus (strain MIT 9215).